We begin with the raw amino-acid sequence, 113 residues long: Hydrogenase maturation factor HypA 2 (113 aa).

H2 contacts Ni(2+). 4 residues coordinate Zn(2+): C73, C76, C89, and C92.

It belongs to the HypA/HybF family.

In terms of biological role, involved in the maturation of [NiFe] hydrogenases. Required for nickel insertion into the metal center of the hydrogenase. This Bradyrhizobium diazoefficiens (strain JCM 10833 / BCRC 13528 / IAM 13628 / NBRC 14792 / USDA 110) protein is Hydrogenase maturation factor HypA 2.